Reading from the N-terminus, the 61-residue chain is MAKKSMIVKALRKPKYKTRQKNRCKLCGRPKGYMRDFSMCRICFRNHASAGLIPGVSKSSW.

Cysteine 24, cysteine 27, cysteine 40, and cysteine 43 together coordinate Zn(2+).

The protein belongs to the universal ribosomal protein uS14 family. Zinc-binding uS14 subfamily. In terms of assembly, part of the 30S ribosomal subunit. Contacts proteins S3 and S10. Requires Zn(2+) as cofactor.

Functionally, binds 16S rRNA, required for the assembly of 30S particles and may also be responsible for determining the conformation of the 16S rRNA at the A site. The sequence is that of Small ribosomal subunit protein uS14 from Borrelia duttonii (strain Ly).